The primary structure comprises 197 residues: ATP-dependent Clp protease proteolytic subunit (197 aa).

Catalysis depends on S98, which acts as the Nucleophile. H123 is an active-site residue.

Belongs to the peptidase S14 family. Fourteen ClpP subunits assemble into 2 heptameric rings which stack back to back to give a disk-like structure with a central cavity, resembling the structure of eukaryotic proteasomes.

The protein localises to the cytoplasm. The enzyme catalyses Hydrolysis of proteins to small peptides in the presence of ATP and magnesium. alpha-casein is the usual test substrate. In the absence of ATP, only oligopeptides shorter than five residues are hydrolyzed (such as succinyl-Leu-Tyr-|-NHMec, and Leu-Tyr-Leu-|-Tyr-Trp, in which cleavage of the -Tyr-|-Leu- and -Tyr-|-Trp bonds also occurs).. Its function is as follows. Cleaves peptides in various proteins in a process that requires ATP hydrolysis. Has a chymotrypsin-like activity. Plays a major role in the degradation of misfolded proteins. This Anaplasma phagocytophilum (strain HZ) protein is ATP-dependent Clp protease proteolytic subunit.